We begin with the raw amino-acid sequence, 120 residues long: Phosphoribosyl-AMP cyclohydrolase (120 aa).

Mg(2+) is bound at residue aspartate 74. Cysteine 75 serves as a coordination point for Zn(2+). Residues aspartate 76 and aspartate 78 each contribute to the Mg(2+) site. Residues cysteine 91 and cysteine 98 each coordinate Zn(2+).

The protein belongs to the PRA-CH family. Homodimer. The cofactor is Mg(2+). It depends on Zn(2+) as a cofactor.

It localises to the cytoplasm. It carries out the reaction 1-(5-phospho-beta-D-ribosyl)-5'-AMP + H2O = 1-(5-phospho-beta-D-ribosyl)-5-[(5-phospho-beta-D-ribosylamino)methylideneamino]imidazole-4-carboxamide. It participates in amino-acid biosynthesis; L-histidine biosynthesis; L-histidine from 5-phospho-alpha-D-ribose 1-diphosphate: step 3/9. Catalyzes the hydrolysis of the adenine ring of phosphoribosyl-AMP. This chain is Phosphoribosyl-AMP cyclohydrolase, found in Natronomonas pharaonis (strain ATCC 35678 / DSM 2160 / CIP 103997 / JCM 8858 / NBRC 14720 / NCIMB 2260 / Gabara) (Halobacterium pharaonis).